The sequence spans 595 residues: Proline--tRNA ligase (595 aa).

The interval 1–22 is disordered; sequence MKMSTMFGATLHTAPGRSESEG.

This sequence belongs to the class-II aminoacyl-tRNA synthetase family. ProS type 1 subfamily. Homodimer.

It localises to the cytoplasm. The catalysed reaction is tRNA(Pro) + L-proline + ATP = L-prolyl-tRNA(Pro) + AMP + diphosphate. Catalyzes the attachment of proline to tRNA(Pro) in a two-step reaction: proline is first activated by ATP to form Pro-AMP and then transferred to the acceptor end of tRNA(Pro). As ProRS can inadvertently accommodate and process non-cognate amino acids such as alanine and cysteine, to avoid such errors it has two additional distinct editing activities against alanine. One activity is designated as 'pretransfer' editing and involves the tRNA(Pro)-independent hydrolysis of activated Ala-AMP. The other activity is designated 'posttransfer' editing and involves deacylation of mischarged Ala-tRNA(Pro). The misacylated Cys-tRNA(Pro) is not edited by ProRS. The protein is Proline--tRNA ligase of Salinispora tropica (strain ATCC BAA-916 / DSM 44818 / JCM 13857 / NBRC 105044 / CNB-440).